We begin with the raw amino-acid sequence, 320 residues long: tRNA U34 carboxymethyltransferase (320 aa).

Carboxy-S-adenosyl-L-methionine-binding positions include Lys-89, Trp-103, Lys-108, Gly-128, 150-152, 179-180, Met-194, Tyr-198, and Arg-313; these read DPT and IE.

Belongs to the class I-like SAM-binding methyltransferase superfamily. CmoB family. As to quaternary structure, homotetramer.

The enzyme catalyses carboxy-S-adenosyl-L-methionine + 5-hydroxyuridine(34) in tRNA = 5-carboxymethoxyuridine(34) in tRNA + S-adenosyl-L-homocysteine + H(+). Functionally, catalyzes carboxymethyl transfer from carboxy-S-adenosyl-L-methionine (Cx-SAM) to 5-hydroxyuridine (ho5U) to form 5-carboxymethoxyuridine (cmo5U) at position 34 in tRNAs. The protein is tRNA U34 carboxymethyltransferase of Actinobacillus pleuropneumoniae serotype 3 (strain JL03).